A 109-amino-acid polypeptide reads, in one-letter code: Spermidine export protein MdtI (109 aa).

4 helical membrane passes run Trp-6 to Leu-26, Phe-36 to Val-56, Ala-64 to Phe-84, and Leu-88 to Leu-108.

Belongs to the drug/metabolite transporter (DMT) superfamily. Small multidrug resistance (SMR) (TC 2.A.7.1) family. MdtI subfamily. Forms a complex with MdtJ.

The protein resides in the cell inner membrane. Its function is as follows. Catalyzes the excretion of spermidine. This is Spermidine export protein MdtI from Citrobacter koseri (strain ATCC BAA-895 / CDC 4225-83 / SGSC4696).